The primary structure comprises 158 residues: Snaclec agglucetin subunit alpha-2 (158 aa).

The N-terminal stretch at methionine 1 to alanine 23 is a signal peptide. 3 disulfide bridges follow: cysteine 27/cysteine 38, cysteine 55/cysteine 152, and cysteine 127/cysteine 144. One can recognise a C-type lectin domain in the interval tyrosine 34–lysine 153.

This sequence belongs to the snaclec family. In terms of assembly, heterotetramer of the subunits alpha-1, alpha-2, beta-1 and beta-2; disulfide-linked. As to expression, expressed by the venom gland.

Its subcellular location is the secreted. Its function is as follows. Agglucetin specifically causes platelet aggregation and surface exposure of integrin alpha-IIb/beta-3 with a GPIb-(GP1BA-) dependent manner in washed platelets. It binds to human platelets in a saturable manner, and its binding is specifically blocked by anti-GP Ib mAb. It regulates endothelial cell survival and promotes angiogenesis by activating integrin alpha-v/beta-3 signaling through FAK/phosphatidylinositol 3-kinase (PI3K)/Akt pathway. In Deinagkistrodon acutus (Hundred-pace snake), this protein is Snaclec agglucetin subunit alpha-2.